We begin with the raw amino-acid sequence, 162 residues long: Ribonuclease (162 aa).

Residues 1-29 (MKKISSVFTMFALIAAILFSGFIPQQAYA) form the signal peptide. Positions 30 to 53 (ETPLTQTATNETATIQLTSDVHTL) are excised as a propeptide. Catalysis depends on Glu-125, which acts as the Proton acceptor. His-154 serves as the catalytic Proton donor.

Belongs to the ribonuclease N1/T1 family.

The protein resides in the secreted. This is a purine-specific ribonuclease. The protein is Ribonuclease of Bacillus intermedius.